We begin with the raw amino-acid sequence, 409 residues long: Beta-arrestin-2 (409 aa).

At Y48 the chain carries Phosphotyrosine. 2 positions are modified to hydroxyproline; by PHD2: P176 and P181. The segment at 240 to 409 (ADICLFSTAQ…KDDDYDDQLC (170 aa)) is interaction with TRAF6. S360 bears the Phosphoserine mark. Positions 363–409 (PETDVPVDTNLIEFDTNYATDDDIVFEDFARLRLKGMKDDDYDDQLC) are interaction with AP2B1. Position 382 is a phosphothreonine (T382). The short motif at 385 to 395 (DIVFEDFARLR) is the [DE]-X(1,2)-F-X-X-[FL]-X-X-X-R motif element.

It belongs to the arrestin family. As to quaternary structure, homooligomer; the self-association is mediated by InsP6-binding. Heterooligomer with ARRB1; the association is mediated by InsP6-binding. Interacts with ADRB2 and CHRM2. Interacts with PDE4A. Interacts with PDE4D. Interacts with MAPK10, MAPK1 and MAPK3. Interacts with DRD2. Interacts with FSHR. Interacts with CLTC. Interacts with HTR2C. Interacts with CCR5. Interacts with CXCR4. Interacts with SRC. Interacts with DUSP16; the interaction is interrupted by stimulation of AGTR1 and activation of MAPK10. Interacts with CHUK; the interaction is enhanced stimulation of ADRB2. Interacts with RELA. Interacts with MDM2; the interaction is enhanced by activation of GPCRs. Interacts with SLC9A5. Interacts with TRAF6. Interacts with IGF1R. Interacts with ENG. Interacts with KIR2DL1, KIR2DL3 and KIR2DL4. Interacts with LDLR. Interacts with AP2B1. Interacts with C5AR1. Interacts with RAF1. Interacts with MAP2K1. Interacts with MAPK1. Interacts with MAPK10; the interaction enhances MAPK10 activation by MAP3K5. Interacts with MAP2K4; the interaction is enhanced by presence of MAP3K5 and MAPK10. Interacts with MAP3K5. Interacts with AKT1. Interacts with IKBKB and MAP3K14. Interacts with SMO (activated). Interacts with GSK3A and GSK3B. Associates with protein phosphatase 2A (PP2A). Interacts with DHX8; the interaction is detected in the nucleus upon OR1D2 stimulation. Interacts with GAPDHS; the interaction is detected in the nucleus upon OR1D2 stimulation. Interacts with H2AFX; the interaction is detected in the nucleus upon OR1D2 stimulation. Interacts with KIF14; the interaction is detected in the nucleus upon OR1D2 stimulation. Interacts with RCC1; the interaction is detected in the nucleus upon OR1D2 stimulation. Interacts with CXCR4; the interaction is dependent on C-terminal phosphorylation of CXCR4 and allows activation of MAPK1 and MAPK3. Interacts with GPR143. Interacts with HCK and CXCR1 (phosphorylated). Interacts with ACKR3 and ACKR4. Interacts with ARRDC1; the interaction is direct. Interacts with GPR61, GPR62 and GPR135. Interacts (via NACHT and LRR domains) with NLRP3; this interaction is direct and inducible by omega-3 polyunsaturated fatty acids (PUFAs). Interacts with FFAR4 (via C-terminus); this interaction is stimulated by long-chain fatty acids (LCFAs). Interacts with GPR35. Interacts with GPR84. Interacts with TIGIT; this interaction inhibits the NF-kappa-B pathway. Interacts with TGFBR3. In terms of processing, phosphorylated at Thr-382 in the cytoplasm; probably dephosphorylated at the plasma membrane. The phosphorylation does not regulate internalization and recycling of ADRB2, interaction with clathrin or AP2B1. Post-translationally, the ubiquitination status appears to regulate the formation and trafficking of beta-arrestin-GPCR complexes and signaling. Ubiquitination appears to occur GPCR-specific. Ubiquitinated by MDM2; the ubiquitination is required for rapid internalization of ADRB2. Deubiquitinated by USP33; the deubiquitination leads to a dissociation of the beta-arrestin-GPCR complex. Stimulation of a class A GPCR, such as ADRB2, induces transient ubiquitination and subsequently promotes association with USP33. Stimulation of a class B GPCR promotes a sustained ubiquitination. Deubiquitinated by USP20; allowing USP20 to deubiquitinate TRAF6 leading to inhibition of NF-kappa-B signaling. Hydroxylation by PHD2 modulates the rate of internalization by slowing down recruitment to the plasma membrane and inhibiting subsequent co-internalization with class A receptors.

The protein localises to the cytoplasm. The protein resides in the nucleus. Its subcellular location is the cell membrane. It localises to the membrane. It is found in the clathrin-coated pit. The protein localises to the cytoplasmic vesicle. Its function is as follows. Functions in regulating agonist-mediated G-protein coupled receptor (GPCR) signaling by mediating both receptor desensitization and resensitization processes. During homologous desensitization, beta-arrestins bind to the GPRK-phosphorylated receptor and sterically preclude its coupling to the cognate G-protein; the binding appears to require additional receptor determinants exposed only in the active receptor conformation. The beta-arrestins target many receptors for internalization by acting as endocytic adapters (CLASPs, clathrin-associated sorting proteins) and recruiting the GPRCs to the adapter protein 2 complex 2 (AP-2) in clathrin-coated pits (CCPs). However, the extent of beta-arrestin involvement appears to vary significantly depending on the receptor, agonist and cell type. Internalized arrestin-receptor complexes traffic to intracellular endosomes, where they remain uncoupled from G-proteins. Two different modes of arrestin-mediated internalization occur. Class A receptors, like ADRB2, OPRM1, ENDRA, D1AR and ADRA1B dissociate from beta-arrestin at or near the plasma membrane and undergo rapid recycling. Class B receptors, like AVPR2, AGTR1, NTSR1, TRHR and TACR1 internalize as a complex with arrestin and traffic with it to endosomal vesicles, presumably as desensitized receptors, for extended periods of time. Receptor resensitization then requires that receptor-bound arrestin is removed so that the receptor can be dephosphorylated and returned to the plasma membrane. Mediates endocytosis of CCR7 following ligation of CCL19 but not CCL21. Involved in internalization of P2RY1, P2RY4, P2RY6 and P2RY11 and ATP-stimulated internalization of P2RY2. Involved in phosphorylation-dependent internalization of OPRD1 and subsequent recycling or degradation. Involved in ubiquitination of IGF1R. Beta-arrestins function as multivalent adapter proteins that can switch the GPCR from a G-protein signaling mode that transmits short-lived signals from the plasma membrane via small molecule second messengers and ion channels to a beta-arrestin signaling mode that transmits a distinct set of signals that are initiated as the receptor internalizes and transits the intracellular compartment. Acts as a signaling scaffold for MAPK pathways such as MAPK1/3 (ERK1/2) and MAPK10 (JNK3). ERK1/2 and JNK3 activated by the beta-arrestin scaffold are largely excluded from the nucleus and confined to cytoplasmic locations such as endocytic vesicles, also called beta-arrestin signalosomes. Acts as a signaling scaffold for the AKT1 pathway. GPCRs for which the beta-arrestin-mediated signaling relies on both ARRB1 and ARRB2 (codependent regulation) include ADRB2, F2RL1 and PTH1R. For some GPCRs the beta-arrestin-mediated signaling relies on either ARRB1 or ARRB2 and is inhibited by the other respective beta-arrestin form (reciprocal regulation). Increases ERK1/2 signaling in AGTR1- and AVPR2-mediated activation (reciprocal regulation). Involved in CCR7-mediated ERK1/2 signaling involving ligand CCL19. Is involved in type-1A angiotensin II receptor/AGTR1-mediated ERK activity. Is involved in type-1A angiotensin II receptor/AGTR1-mediated MAPK10 activity. Is involved in dopamine-stimulated AKT1 activity in the striatum by disrupting the association of AKT1 with its negative regulator PP2A. Involved in AGTR1-mediated chemotaxis. Appears to function as signaling scaffold involved in regulation of MIP-1-beta-stimulated CCR5-dependent chemotaxis. Involved in attenuation of NF-kappa-B-dependent transcription in response to GPCR or cytokine stimulation by interacting with and stabilizing CHUK. Suppresses UV-induced NF-kappa-B-dependent activation by interacting with CHUK. The function is promoted by stimulation of ADRB2 and dephosphorylation of ARRB2. Involved in p53/TP53-mediated apoptosis by regulating MDM2 and reducing the MDM2-mediated degradation of p53/TP53. May serve as nuclear messenger for GPCRs. Upon stimulation of OR1D2, may be involved in regulation of gene expression during the early processes of fertilization. Also involved in regulation of receptors other than GPCRs. Involved in endocytosis of TGFBR2 and TGFBR3 and down-regulates TGF-beta signaling such as NF-kappa-B activation. Involved in endocytosis of low-density lipoprotein receptor/LDLR. Involved in endocytosis of smoothened homolog/Smo, which also requires GRK2. Involved in endocytosis of SLC9A5. Involved in endocytosis of ENG and subsequent TGF-beta-mediated ERK activation and migration of epithelial cells. Involved in Toll-like receptor and IL-1 receptor signaling through the interaction with TRAF6 which prevents TRAF6 autoubiquitination and oligomerization required for activation of NF-kappa-B and JUN. Involved in insulin resistance by acting as insulin-induced signaling scaffold for SRC, AKT1 and INSR. Involved in regulation of inhibitory signaling of natural killer cells by recruiting PTPN6 and PTPN11 to KIR2DL1. Involved in IL8-mediated granule release in neutrophils. Involved in the internalization of the atypical chemokine receptor ACKR3. Acts as an adapter protein coupling FFAR4 receptor to specific downstream signaling pathways, as well as mediating receptor endocytosis. During the activation step of NLRP3 inflammasome, directly associates with NLRP3 leading to inhibition of pro-inflammatory cytokine release and inhibition of inflammation. In Homo sapiens (Human), this protein is Beta-arrestin-2 (ARRB2).